The chain runs to 315 residues: BTB/POZ domain-containing adapter for CUL3-mediated RhoA degradation protein 3 (315 aa).

M1 is subject to N-acetylmethionine. Position 23 is a phosphoserine (S23). The BTB domain maps to 32-100; that stretch reads KYVKLNVGGA…LRDGAVPLPE (69 aa). The Interaction with PCNA motif lies at 239–245; that stretch reads QTKVEFP. The segment at 269 to 294 is disordered; it reads NALLEATGGAAGRSHHLDEDEERERE.

Belongs to the BACURD family. As to quaternary structure, homotetramer; forms a two-fold symmetric tetramer in solution. Interacts with CUL3; interaction is direct and forms a 5:5 heterodecamer. Component of the BCR(BACURD3) E3 ubiquitin ligase complex, at least composed of CUL3, KCTD10/BACURD3 and RBX1. Interacts with DNA polymerase delta subunit 2/POLD2. Interacts with PCNA. In terms of tissue distribution, expressed at highest levels in lung. Also detected in testis and heart. Very low expression, if any, in brain, liver, spleen, kidney and skeletal muscle.

The protein localises to the nucleus. Its pathway is protein modification; protein ubiquitination. Its function is as follows. Substrate-specific adapter of a BCR (BTB-CUL3-RBX1) E3 ubiquitin-protein ligase complex. The BCR(BACURD3) E3 ubiquitin ligase complex mediates the ubiquitination of target proteins, leading to their degradation by the proteasome. This is BTB/POZ domain-containing adapter for CUL3-mediated RhoA degradation protein 3 (Kctd10) from Rattus norvegicus (Rat).